The sequence spans 268 residues: 3-methyl-2-oxobutanoate hydroxymethyltransferase (268 aa).

2 residues coordinate Mg(2+): Asp-46 and Asp-85. 3-methyl-2-oxobutanoate contacts are provided by residues 46–47 (DS), Asp-85, and Lys-115. Mg(2+) is bound at residue Glu-117. The active-site Proton acceptor is the Glu-184.

The protein belongs to the PanB family. Homodecamer; pentamer of dimers. Requires Mg(2+) as cofactor.

Its subcellular location is the cytoplasm. The enzyme catalyses 3-methyl-2-oxobutanoate + (6R)-5,10-methylene-5,6,7,8-tetrahydrofolate + H2O = 2-dehydropantoate + (6S)-5,6,7,8-tetrahydrofolate. Its pathway is cofactor biosynthesis; (R)-pantothenate biosynthesis; (R)-pantoate from 3-methyl-2-oxobutanoate: step 1/2. Functionally, catalyzes the reversible reaction in which hydroxymethyl group from 5,10-methylenetetrahydrofolate is transferred onto alpha-ketoisovalerate to form ketopantoate. This Magnetococcus marinus (strain ATCC BAA-1437 / JCM 17883 / MC-1) protein is 3-methyl-2-oxobutanoate hydroxymethyltransferase.